The sequence spans 48 residues: Large ribosomal subunit protein bL33A (48 aa).

The protein belongs to the bacterial ribosomal protein bL33 family.

This is Large ribosomal subunit protein bL33A from Shouchella clausii (strain KSM-K16) (Alkalihalobacillus clausii).